The primary structure comprises 67 residues: MARITVEDCLKQIPNRFELALAATYRARQLAQGHTPKIESRDKPTVVALREIAAGQVGVEMLKKVPA.

It belongs to the RNA polymerase subunit omega family. As to quaternary structure, the RNAP catalytic core consists of 2 alpha, 1 beta, 1 beta' and 1 omega subunit. When a sigma factor is associated with the core the holoenzyme is formed, which can initiate transcription.

The enzyme catalyses RNA(n) + a ribonucleoside 5'-triphosphate = RNA(n+1) + diphosphate. Promotes RNA polymerase assembly. Latches the N- and C-terminal regions of the beta' subunit thereby facilitating its interaction with the beta and alpha subunits. This Burkholderia pseudomallei (strain 1106a) protein is DNA-directed RNA polymerase subunit omega.